The primary structure comprises 229 residues: 2-C-methyl-D-erythritol 4-phosphate cytidylyltransferase (229 aa).

This sequence belongs to the IspD/TarI cytidylyltransferase family. IspD subfamily.

It carries out the reaction 2-C-methyl-D-erythritol 4-phosphate + CTP + H(+) = 4-CDP-2-C-methyl-D-erythritol + diphosphate. The protein operates within isoprenoid biosynthesis; isopentenyl diphosphate biosynthesis via DXP pathway; isopentenyl diphosphate from 1-deoxy-D-xylulose 5-phosphate: step 2/6. Functionally, catalyzes the formation of 4-diphosphocytidyl-2-C-methyl-D-erythritol from CTP and 2-C-methyl-D-erythritol 4-phosphate (MEP). The sequence is that of 2-C-methyl-D-erythritol 4-phosphate cytidylyltransferase from Clostridium botulinum (strain 657 / Type Ba4).